Consider the following 315-residue polypeptide: Ribose-phosphate pyrophosphokinase (315 aa).

Residues 37-39 (DGE) and 96-97 (RQ) each bind ATP. 2 residues coordinate Mg(2+): histidine 131 and aspartate 170. The active site involves lysine 194. Residues arginine 196, aspartate 220, and 224 to 228 (DTGGT) contribute to the D-ribose 5-phosphate site.

This sequence belongs to the ribose-phosphate pyrophosphokinase family. Class I subfamily. In terms of assembly, homohexamer. The cofactor is Mg(2+).

It is found in the cytoplasm. It catalyses the reaction D-ribose 5-phosphate + ATP = 5-phospho-alpha-D-ribose 1-diphosphate + AMP + H(+). It functions in the pathway metabolic intermediate biosynthesis; 5-phospho-alpha-D-ribose 1-diphosphate biosynthesis; 5-phospho-alpha-D-ribose 1-diphosphate from D-ribose 5-phosphate (route I): step 1/1. Its function is as follows. Involved in the biosynthesis of the central metabolite phospho-alpha-D-ribosyl-1-pyrophosphate (PRPP) via the transfer of pyrophosphoryl group from ATP to 1-hydroxyl of ribose-5-phosphate (Rib-5-P). The polypeptide is Ribose-phosphate pyrophosphokinase (Buchnera aphidicola subsp. Acyrthosiphon pisum (strain APS) (Acyrthosiphon pisum symbiotic bacterium)).